Consider the following 739-residue polypeptide: Transcription regulator protein BACH1 (739 aa).

The 67-residue stretch at 34 to 100 (CDVTVLVEGQ…AYTAKLILSK (67 aa)) folds into the BTB domain. A Phosphoserine modification is found at Ser196. Disordered regions lie at residues 287-321 (MESEDTEGQDPSPQCPAEQPQGTPLPQDSAGPHGL) and 344-391 (KTVK…RSSV). 2 stretches are compositionally biased toward basic and acidic residues: residues 346-364 (VKTEKPLSRPDAQDEKPSE) and 376-391 (PKEDSSSLASEDRSSV). At Ser448 the chain carries Phosphoserine. The bZIP domain occupies 560-623 (CIHDIRRRSK…GETKQNLTGL (64 aa)). Residues 565 to 581 (RRRSKNRIAAQRCRKRK) form a basic motif region. The segment at 585-592 (IQNLESEI) is leucine-zipper. Residues 679–708 (PPTAPPPCGRGSSAASQELVQESPPTTAAA) are disordered. A compositionally biased stretch (low complexity) spans 699–708 (QESPPTTAAA).

It belongs to the bZIP family. CNC subfamily. As to quaternary structure, heterodimer of BACH1 and MAFK. Ubiquitinated by the SCF(FBXL17) complex or by the by the SCF(FBXO22) complex, leading to its degradation by the proteasome. Under oxidative stress, reactive oxygen species covalently modify cysteine residues on the bZIP domain of BACH1 and release it from chromatin. If the BTB domain of BACH1 remains intact, its beta1-alpha6 degron is recognized by FBXO22, promoting its ubiquitination and degradation. If the structural integrity of the beta1-alpha6 degron is compromised, FBXL17 will transiently associate with the BACH1 BTB dimer and remodel it into stably bound monomer for ubiquitination and degradation. In terms of tissue distribution, ubiquitous.

It is found in the nucleus. Transcriptional regulator that acts as a repressor or activator, depending on the context. Binds to NF-E2 DNA binding sites. Plays important roles in coordinating transcription activation and repression by MAFK. Together with MAF, represses the transcription of genes under the control of the NFE2L2 oxidative stress pathway. The sequence is that of Transcription regulator protein BACH1 (Bach1) from Mus musculus (Mouse).